The following is a 128-amino-acid chain: Ribosome-binding factor A (128 aa).

This sequence belongs to the RbfA family. As to quaternary structure, monomer. Binds 30S ribosomal subunits, but not 50S ribosomal subunits or 70S ribosomes.

The protein localises to the cytoplasm. In terms of biological role, one of several proteins that assist in the late maturation steps of the functional core of the 30S ribosomal subunit. Associates with free 30S ribosomal subunits (but not with 30S subunits that are part of 70S ribosomes or polysomes). Required for efficient processing of 16S rRNA. May interact with the 5'-terminal helix region of 16S rRNA. This Haemophilus influenzae (strain 86-028NP) protein is Ribosome-binding factor A.